Here is a 285-residue protein sequence, read N- to C-terminus: 2-dehydro-3-deoxyphosphooctonate aldolase (285 aa).

The protein belongs to the KdsA family.

It is found in the cytoplasm. The enzyme catalyses D-arabinose 5-phosphate + phosphoenolpyruvate + H2O = 3-deoxy-alpha-D-manno-2-octulosonate-8-phosphate + phosphate. It functions in the pathway carbohydrate biosynthesis; 3-deoxy-D-manno-octulosonate biosynthesis; 3-deoxy-D-manno-octulosonate from D-ribulose 5-phosphate: step 2/3. It participates in bacterial outer membrane biogenesis; lipopolysaccharide biosynthesis. In Bordetella bronchiseptica (strain ATCC BAA-588 / NCTC 13252 / RB50) (Alcaligenes bronchisepticus), this protein is 2-dehydro-3-deoxyphosphooctonate aldolase.